The primary structure comprises 236 residues: 2,3,4,5-tetrahydropyridine-2,6-dicarboxylate N-acetyltransferase (236 aa).

This sequence belongs to the transferase hexapeptide repeat family. DapH subfamily.

The enzyme catalyses (S)-2,3,4,5-tetrahydrodipicolinate + acetyl-CoA + H2O = L-2-acetamido-6-oxoheptanedioate + CoA. It functions in the pathway amino-acid biosynthesis; L-lysine biosynthesis via DAP pathway; LL-2,6-diaminopimelate from (S)-tetrahydrodipicolinate (acetylase route): step 1/3. Its function is as follows. Catalyzes the transfer of an acetyl group from acetyl-CoA to tetrahydrodipicolinate. The sequence is that of 2,3,4,5-tetrahydropyridine-2,6-dicarboxylate N-acetyltransferase from Lactobacillus acidophilus (strain ATCC 700396 / NCK56 / N2 / NCFM).